Here is a 396-residue protein sequence, read N- to C-terminus: NADH-quinone oxidoreductase subunit D (396 aa).

It belongs to the complex I 49 kDa subunit family. In terms of assembly, NDH-1 is composed of 14 different subunits. Subunits NuoB, C, D, E, F, and G constitute the peripheral sector of the complex.

It is found in the cell inner membrane. It catalyses the reaction a quinone + NADH + 5 H(+)(in) = a quinol + NAD(+) + 4 H(+)(out). In terms of biological role, NDH-1 shuttles electrons from NADH, via FMN and iron-sulfur (Fe-S) centers, to quinones in the respiratory chain. The immediate electron acceptor for the enzyme in this species is believed to be ubiquinone. Couples the redox reaction to proton translocation (for every two electrons transferred, four hydrogen ions are translocated across the cytoplasmic membrane), and thus conserves the redox energy in a proton gradient. In Agrobacterium fabrum (strain C58 / ATCC 33970) (Agrobacterium tumefaciens (strain C58)), this protein is NADH-quinone oxidoreductase subunit D.